The following is a 151-amino-acid chain: Phospholipase A2 inhibitor BjussuMIP (151 aa).

Positions 1–4 (LANG) are cleaved as a signal peptide. Residues 31–146 (LKYAFLTVHK…CDENLLVVCE (116 aa)) form the C-type lectin domain. 2 cysteine pairs are disulfide-bonded: cysteine 68–cysteine 145 and cysteine 123–cysteine 137. A glycan (N-linked (GlcNAc...) asparagine) is linked at asparagine 107.

It belongs to the alpha-type phospholipase A2 inhibitor family. As to quaternary structure, oligomer. As to expression, expressed by the liver.

It is found in the secreted. Inhibits enzymatic, anticoagulant, edema formation, myotoxicity activities induced by snakes phospholipase A2. Is oligomeric, but it is probable that each of its subunits can bind and inactive a PLA2 molecule. This Bothrops jararacussu (Jararacussu) protein is Phospholipase A2 inhibitor BjussuMIP.